The sequence spans 67 residues: ARDGYIAKPHNCVYECFDAFSSYCNGVCTKNGAKSGYCQILGIYGNGCWCIALPDNVPIRIPGKCHR.

Residues 2-66 enclose the LCN-type CS-alpha/beta domain; that stretch reads RDGYIAKPHN…VPIRIPGKCH (65 aa). Disulfide bonds link C12-C65, C16-C38, C24-C48, and C28-C50. Residue R67 is a propeptide, removed by a carboxypeptidase.

The protein belongs to the long (4 C-C) scorpion toxin superfamily. Sodium channel inhibitor family. Alpha subfamily. Expressed by the venom gland.

Its subcellular location is the secreted. Its function is as follows. Alpha toxins bind voltage-independently at site-3 of sodium channels (Nav) and inhibit the inactivation of the activated channels, thereby blocking neuronal transmission. In Mesobuthus eupeus (Lesser Asian scorpion), this protein is Sodium channel neurotoxin MeuNaTxalpha-10.